Here is a 333-residue protein sequence, read N- to C-terminus: Foldase protein PrsA (333 aa).

Residues 1–22 (MKKSTKLLAGIVTLASAMTLAA) form the signal peptide. Residue cysteine 23 is the site of N-palmitoyl cysteine attachment. A lipid anchor (S-diacylglycerol cysteine) is attached at cysteine 23. The region spanning 145-240 (TPEMTTQVIT…NKFYIVKVTK (96 aa)) is the PpiC domain. A disordered region spans residues 301–333 (DKKASKANTSKSDQKTSSDSSKDSQSSKSKSEK). Positions 312 to 322 (SDQKTSSDSSK) are enriched in basic and acidic residues. The span at 323–333 (DSQSSKSKSEK) shows a compositional bias: low complexity.

Belongs to the PrsA family.

It localises to the cell membrane. It catalyses the reaction [protein]-peptidylproline (omega=180) = [protein]-peptidylproline (omega=0). Its function is as follows. Plays a major role in protein secretion by helping the post-translocational extracellular folding of several secreted proteins. The sequence is that of Foldase protein PrsA from Streptococcus equi subsp. zooepidemicus (strain H70).